The primary structure comprises 289 residues: MDPFILAAIISGIVIIILSIAFLRVSQVKPQAAARPRAVVQRDGGPGRVQAVRNQRARMRANAARHQAALEEEPEIQEEADEGAPDIDQKIDFDDKMGAKKRAKMEAKLEKKKAHEAEEHLREIKKKKEEEQEQERKKIEEKQEEEERKREEAEKKAEDERKKREQEEYEAMKAAFSIEGEGFDENEEEDRESLLRDFIGYIKTQKVVLLEDLAAHFKLKTQAAIDRITELQASGELTGVIDDRGKFIYISQSELESIAKFIKQRGRVSIAELAECSNDLINLAPVTVP.

Over 1 to 2 the chain is Lumenal; it reads MD. A helical membrane pass occupies residues 3 to 23; that stretch reads PFILAAIISGIVIIILSIAFL. The Cytoplasmic portion of the chain corresponds to 24–289; the sequence is RVSQVKPQAA…LINLAPVTVP (266 aa). The interval 65 to 168 is disordered; it reads RHQAALEEEP…DERKKREQEE (104 aa). Residues 70-85 show a composition bias toward acidic residues; the sequence is LEEEPEIQEEADEGAP. The segment covering 87–166 has biased composition (basic and acidic residues); it reads IDQKIDFDDK…AEDERKKREQ (80 aa).

Belongs to the DDRGK1 family. In terms of assembly, interacts with Atg9; the interaction is transient.

It localises to the endoplasmic reticulum membrane. Its function is as follows. Substrate adapter for ufmylation, the covalent attachment of the ubiquitin-like modifier UFM1 to substrate proteins. Required for ufmylation of Atg9; protects the nervous system during aging, possibly by stabilizing Atg9 and supporting its function. This is DDRGK domain-containing protein 1 from Bombyx mori (Silk moth).